A 593-amino-acid polypeptide reads, in one-letter code: Mitoguardin 2 (593 aa).

2 helical membrane passes run 11–31 and 42–62; these read MIQALAMTVAEIPVFLYTTFG and PGLRKVLFATALGTVALALAA. 2 disordered regions span residues 101–134 and 195–228; these read KKGYSNRRVQSPSSKSNDTLSGISSIEPSKHSGS and LSVGQRGDSGSTPTPGDGLRNPETASEALSEPES. Positions 107-123 are enriched in polar residues; the sequence is RRVQSPSSKSNDTLSGI. Low complexity predominate over residues 124–134; it reads SSIEPSKHSGS. Phosphoserine is present on Ser132. Thr206 bears the Phosphothreonine mark. A phosphoserine mark is found at Ser220, Ser224, and Ser228. Residue Thr273 is modified to Phosphothreonine. 2 positions are modified to phosphoserine: Ser276 and Ser295. Residues 292–298 carry the FFAT motif; that stretch reads SFFSATE. A helical transmembrane segment spans residues 563–583; the sequence is ILLGYLGVPAASSIGLNGVLP.

It belongs to the mitoguardin family. In terms of assembly, homodimer and heterodimer; forms heterodimers with MIGA1. Interacts with PLD6/MitoPLD. Interacts (via phosphorylated FFAT motif) with MOSPD2. Post-translationally, phosphorylation at Ser-295 of the FFAT motif activates interaction with MOSPD2.

It is found in the mitochondrion outer membrane. Its function is as follows. Regulator of mitochondrial fusion: acts by forming homo- and heterodimers at the mitochondrial outer membrane and facilitating the formation of PLD6/MitoPLD dimers. May act by regulating phospholipid metabolism via PLD6/MitoPLD. The protein is Mitoguardin 2 of Bos taurus (Bovine).